The sequence spans 161 residues: Nucleotide-binding protein BTH_I0730 (161 aa).

It belongs to the YajQ family.

In terms of biological role, nucleotide-binding protein. The chain is Nucleotide-binding protein BTH_I0730 from Burkholderia thailandensis (strain ATCC 700388 / DSM 13276 / CCUG 48851 / CIP 106301 / E264).